Consider the following 241-residue polypeptide: Leucyl/phenylalanyl-tRNA--protein transferase (241 aa).

The protein belongs to the L/F-transferase family.

It localises to the cytoplasm. It catalyses the reaction N-terminal L-lysyl-[protein] + L-leucyl-tRNA(Leu) = N-terminal L-leucyl-L-lysyl-[protein] + tRNA(Leu) + H(+). It carries out the reaction N-terminal L-arginyl-[protein] + L-leucyl-tRNA(Leu) = N-terminal L-leucyl-L-arginyl-[protein] + tRNA(Leu) + H(+). The catalysed reaction is L-phenylalanyl-tRNA(Phe) + an N-terminal L-alpha-aminoacyl-[protein] = an N-terminal L-phenylalanyl-L-alpha-aminoacyl-[protein] + tRNA(Phe). In terms of biological role, functions in the N-end rule pathway of protein degradation where it conjugates Leu, Phe and, less efficiently, Met from aminoacyl-tRNAs to the N-termini of proteins containing an N-terminal arginine or lysine. This chain is Leucyl/phenylalanyl-tRNA--protein transferase, found in Neisseria meningitidis serogroup C / serotype 2a (strain ATCC 700532 / DSM 15464 / FAM18).